A 266-amino-acid polypeptide reads, in one-letter code: 4-hydroxy-tetrahydrodipicolinate reductase (266 aa).

10 to 15 (GPRGRM) provides a ligand contact to NAD(+). Position 38 (K38) interacts with NADP(+). NAD(+) contacts are provided by residues 99 to 101 (GTT) and 125 to 128 (APNF). H155 serves as the catalytic Proton donor/acceptor. H156 contributes to the (S)-2,3,4,5-tetrahydrodipicolinate binding site. K159 serves as the catalytic Proton donor. Position 165–166 (165–166 (GT)) interacts with (S)-2,3,4,5-tetrahydrodipicolinate.

This sequence belongs to the DapB family.

It localises to the cytoplasm. The catalysed reaction is (S)-2,3,4,5-tetrahydrodipicolinate + NAD(+) + H2O = (2S,4S)-4-hydroxy-2,3,4,5-tetrahydrodipicolinate + NADH + H(+). It carries out the reaction (S)-2,3,4,5-tetrahydrodipicolinate + NADP(+) + H2O = (2S,4S)-4-hydroxy-2,3,4,5-tetrahydrodipicolinate + NADPH + H(+). It participates in amino-acid biosynthesis; L-lysine biosynthesis via DAP pathway; (S)-tetrahydrodipicolinate from L-aspartate: step 4/4. In terms of biological role, catalyzes the conversion of 4-hydroxy-tetrahydrodipicolinate (HTPA) to tetrahydrodipicolinate. The sequence is that of 4-hydroxy-tetrahydrodipicolinate reductase from Bacillus cereus (strain ZK / E33L).